The primary structure comprises 1209 residues: 3',5'-cyclic-AMP phosphodiesterase, isoform I (1209 aa).

Disordered stretches follow at residues 16 to 35 (NVAK…GSGT), 59 to 82 (GGGS…KRKS), 275 to 353 (LYSG…PLPP), 372 to 403 (SATS…SPRI), 442 to 498 (ETLA…MQAE), 626 to 655 (VPAS…LSQG), and 754 to 792 (SAGQ…RLPT). 2 stretches are compositionally biased toward gly residues: residues 25-35 (SSNGTGNGSGT) and 59-77 (GGGS…GSGS). Positions 275–290 (LYSGSNPSTNPCQSAV) are enriched in polar residues. Residues 291–314 (QNQGQNSNPNPNQNPNTNPNQNQQ) are compositionally biased toward low complexity. Residues 315 to 324 (RCSCQPQTSP) show a composition bias toward polar residues. Low complexity predominate over residues 372 to 383 (SATSSSAGTVPP). Residues 385 to 400 (GQQTQEYIAGTSSTPS) show a composition bias toward polar residues. Composition is skewed to low complexity over residues 445–462 (ASSS…NSSS) and 472–483 (TSSSASALATSH). 2 stretches are compositionally biased toward polar residues: residues 484-498 (PSNS…MQAE) and 627-645 (PASN…SRSG). One can recognise a PDEase domain in the interval 795-1124 (VETPRENELG…DYYQSMIPPS (330 aa)). His871 functions as the Proton donor in the catalytic mechanism. 871 to 875 (HNSLH) contributes to the 3',5'-cyclic AMP binding site. His875, His911, Asp912, and Asp1029 together coordinate a divalent metal cation. Residues Asp912, Asp1029, and Gln1080 each coordinate 3',5'-cyclic AMP. Over residues 1146–1163 (EESDQENLAELEEGDESG) the composition is skewed to acidic residues. The interval 1146–1209 (EESDQENLAE…CQNQPQHGGM (64 aa)) is disordered. Low complexity predominate over residues 1164–1181 (GESTTTGTTGTTAASALS). The span at 1182–1193 (GAGGGGGGGGGM) shows a compositional bias: gly residues. A compositionally biased stretch (polar residues) spans 1199–1209 (GCQNQPQHGGM).

The protein belongs to the cyclic nucleotide phosphodiesterase family. PDE4 subfamily. Monomer. A divalent metal cation is required as a cofactor.

The catalysed reaction is 3',5'-cyclic AMP + H2O = AMP + H(+). Its pathway is purine metabolism; 3',5'-cyclic AMP degradation; AMP from 3',5'-cyclic AMP: step 1/1. Its function is as follows. Hydrolyzes the second messenger cAMP, which is a key regulator of many important physiological processes. Vital for female fertility. Required for learning/memory. This chain is 3',5'-cyclic-AMP phosphodiesterase, isoform I, found in Drosophila melanogaster (Fruit fly).